The primary structure comprises 179 residues: Chymotrypsin inhibitor ECI (179 aa).

A Pyrrolidone carboxylic acid modification is found at Gln-1. 2 cysteine pairs are disulfide-bonded: Cys-40–Cys-84 and Cys-134–Cys-143.

It belongs to the protease inhibitor I3 (leguminous Kunitz-type inhibitor) family.

Functionally, inhibition of chymotrypsin. In Erythrina variegata (Indian coral tree), this protein is Chymotrypsin inhibitor ECI.